A 364-amino-acid chain; its full sequence is MSTVGSTVSSTPSRRFKHRNVNTFLTYSRCPLEPEAVGLHIWSLIAHWTPVYVLSVRETHEDGGYHIHVLAQSAKPVYTTDSGFFDIDGFHPNIQSAKSANKVRAYAMKNPVTYWERGTFIPRKTSFLGDSTEPNSKKQSKDDIVRDIIEHSTNKQEYLSMIQKALPYEWATKLQYFEYSANKLFPDIQEIYTSPFPQSTPALLDPTAINTWLENNLYQQNSNSNRKLSLYILGPTRTGKSSWARSLGRHNYWQNNVDWSSYDEDAEYNIIDDIPFKYCPCWKQLIGCQKDYIVNPKYGKRKKVASKSIPTIVLANEDEDWLRDMTPAQQDYFNANCETYMLEPGERFFSLPAVSATAHPSSEV.

Residues 17–120 (KHRNVNTFLT…PVTYWERGTF (104 aa)) enclose the CRESS-DNA virus Rep endonuclease domain. The RCR-1 motif lies at 24 to 27 (FLTY). A divalent metal cation contacts are provided by Glu58, His66, and His68. Residues 66 to 68 (HIH) carry the RCR-2 motif. Tyr106 acts as the For DNA cleavage activity in catalysis. Residues 106 to 109 (YAMK) carry the RCR-3 motif. Position 110 (Asn110) interacts with a divalent metal cation. The oligomerization stretch occupies residues 180 to 192 (SANKLFPDIQEIY). 234–241 (GPTRTGKS) lines the ATP pocket. The interval 257–275 (VDWSSYDEDAEYNIIDDIP) is transactivation. The Nuclear localization signal motif lies at 297 to 308 (KYGKRKKVASKS).

It belongs to the geminiviridae Rep protein family. Homooligomer. Rep binds to repeated DNA motifs (iterons). Forms the O-complex, which is a Rep-DNA complex involved in the initiation of RCR. Part of the C- and V-complexes which are RepA-Rep-DNA complexes involved in the c-sense and v-sense transcription. The cofactor is Mg(2+). Mn(2+) is required as a cofactor.

It localises to the host nucleus. In terms of biological role, essential for the replication of viral ssDNA. The closed circular ssDNA genome is first converted to a superhelical dsDNA. Rep binds a specific region at the genome origin of replication. It introduces an endonucleolytic nick within the conserved sequence 5'-TAATATTAC-3' in the intergenic region of the genome present in all geminiviruses, thereby initiating the rolling circle replication (RCR). Following cleavage, binds covalently to the 5'-phosphate of DNA as a tyrosyl ester. The cleavage gives rise to a free 3'-OH that serves as a primer for the cellular DNA polymerase. The polymerase synthesizes the (+) strand DNA by rolling circle mechanism. After one round of replication, a Rep-catalyzed nucleotidyl transfer reaction releases a circular single-stranded virus genome, thereby terminating the replication. Displays origin-specific DNA cleavage, nucleotidyl transferase, ATPase and helicase activities. Acts as an inhibitor of C-sense gene transcription. The polypeptide is Replication-associated protein (Sugarcane streak virus (isolate South Africa) (SSV)).